The following is a 599-amino-acid chain: Beta-myrcene synthase, chloroplastic (599 aa).

Residues 1 to 34 constitute a chloroplast transit peptide; that stretch reads MWSTISISMNVAILKKPLNFLHNSNNKASNPRCV. Mg(2+)-binding residues include Asp352, Asp356, Asp496, Thr500, and Glu504. The DDXXD motif motif lies at 352-356; it reads DDVYD.

This sequence belongs to the terpene synthase family. Requires Mg(2+) as cofactor. The cofactor is Mn(2+).

Its subcellular location is the plastid. It localises to the chloroplast. The enzyme catalyses (2E)-geranyl diphosphate = beta-myrcene + diphosphate. It participates in secondary metabolite biosynthesis; terpenoid biosynthesis. Its function is as follows. Monoterpene synthase that catalyzes the formation of beta-myrcene from geranyl diphosphate. The chain is Beta-myrcene synthase, chloroplastic (MYS) from Ocimum basilicum (Sweet basil).